A 700-amino-acid chain; its full sequence is Polyribonucleotide nucleotidyltransferase (700 aa).

Asp484 and Asp490 together coordinate Mg(2+). The region spanning 551–610 (PRVIRMVVDPEKIREIIGPGGKTISKIIAETGVKIDIEEDGRLYITASDLRSGERAKQMI) is the KH domain. The region spanning 620-688 (GEIYLGKVLR…KLGRISLSRK (69 aa)) is the S1 motif domain.

It belongs to the polyribonucleotide nucleotidyltransferase family. Requires Mg(2+) as cofactor.

Its subcellular location is the cytoplasm. The catalysed reaction is RNA(n+1) + phosphate = RNA(n) + a ribonucleoside 5'-diphosphate. Involved in mRNA degradation. Catalyzes the phosphorolysis of single-stranded polyribonucleotides processively in the 3'- to 5'-direction. In Thermoanaerobacter pseudethanolicus (strain ATCC 33223 / 39E) (Clostridium thermohydrosulfuricum), this protein is Polyribonucleotide nucleotidyltransferase.